A 131-amino-acid polypeptide reads, in one-letter code: Putative pre-16S rRNA nuclease (131 aa).

This sequence belongs to the YqgF nuclease family.

Its subcellular location is the cytoplasm. Functionally, could be a nuclease involved in processing of the 5'-end of pre-16S rRNA. This Bordetella avium (strain 197N) protein is Putative pre-16S rRNA nuclease.